We begin with the raw amino-acid sequence, 116 residues long: Antimicrobial peptide 1b (116 aa).

The N-terminal stretch at 1-34 is a signal peptide; that stretch reads MKPHMSATVLRAPRVAAILLAVVLAAVLATAVNG. One can recognise a Chitin-binding type-1 domain in the interval 35 to 77; it reads AQRCGDQARGAKCPNCLCCGKYGFCGSGDAYCGAGSCQSQCRG. 5 disulfide bridges follow: cysteine 38/cysteine 53, cysteine 47/cysteine 59, cysteine 50/cysteine 78, cysteine 52/cysteine 66, and cysteine 71/cysteine 75. A propeptide spanning residues 80–116 is cleaved from the precursor; the sequence is DDVVGQALPAEPGSTRATAASSASARGLNLTATTGGP. A disordered region spans residues 89 to 116; the sequence is AEPGSTRATAASSASARGLNLTATTGGP. Low complexity predominate over residues 93–105; that stretch reads STRATAASSASAR.

Functionally, binds chitin. Has antifungal activity against the fungi F.solani (IC(50)=5 ug/ml), F.verticillioides (IC(50)=30 ug/ml), F.oxysporum (IC(50)=5 ug/ml), B.sorokiniana (IC(50)=5 ug/ml), B.cinerea (IC(50)=20 ug/ml) and N.crassa (IC(50)=10 ug/ml). Inhibits hyphal elongation and causes browning of hyphae in F.oxysporum. Causes destruction and discoloration of spores in B.sorokiniana. Inhibits the development of disease caused by the fungus P.infestans on potato tubers. Has antibacterial activity against the Gram-negative bacteria P.syringae and E.carotovora, and the Gram-positive bacterium C.michiganensis. In terms of biological role, has antifungal activity against F.verticillioides (IC(50)=2.7 ug/ml). At concentrations between 45 uM and 225 uM, inhibits activity of metalloproteinase fungalysin Fv-cpm from F.verticillioides. This chain is Antimicrobial peptide 1b, found in Triticum kiharae (Wheat).